A 341-amino-acid polypeptide reads, in one-letter code: MNNYLRKLVEGQHLTEEEMYKAGLLLLSENILESEIAAFLVLLKAKGETAEEIYGLVRALREKALPFSNHIQGAMDNCGTGGDGAQTFNISTTSAFVLAGAGVKVAKHGNRAVSSKTGSADLLEELGVNISSTPNEIDYLLEHVGIAFLFAPAMHPALRRIMKIRKELNVPTIFNLIGPLTNPVNLETQFVGIYKRDMLLPVAQVLQKLGRKQALVVNGSGFLDEASLQGENQVVLLKDNEIVEMNIDPENYGFSRVKNEEIRGGNSQENAKITVGVLSGEKSVYRDTVLLNAGLALFANGKTETIEEGIKLATHSIDSGKALTKLNLLIAASNEKLERVN.

5-phospho-alpha-D-ribose 1-diphosphate-binding positions include Gly-79, Gly-82–Asp-83, Thr-87, Asn-89–Thr-92, Lys-107–Ser-115, and Ser-119. Gly-79 lines the anthranilate pocket. Mg(2+) is bound at residue Ser-91. Asn-110 is an anthranilate binding site. Residue Arg-165 participates in anthranilate binding. Asp-224 and Glu-225 together coordinate Mg(2+).

The protein belongs to the anthranilate phosphoribosyltransferase family. In terms of assembly, homodimer. Mg(2+) serves as cofactor.

It catalyses the reaction N-(5-phospho-beta-D-ribosyl)anthranilate + diphosphate = 5-phospho-alpha-D-ribose 1-diphosphate + anthranilate. Its pathway is amino-acid biosynthesis; L-tryptophan biosynthesis; L-tryptophan from chorismate: step 2/5. Functionally, catalyzes the transfer of the phosphoribosyl group of 5-phosphorylribose-1-pyrophosphate (PRPP) to anthranilate to yield N-(5'-phosphoribosyl)-anthranilate (PRA). This chain is Anthranilate phosphoribosyltransferase, found in Bacillus cereus (strain G9842).